The sequence spans 376 residues: MRIGFLSHAGASIYHFRMPIIKALKDRKDEVFVIVPQDEYTQKLRDLGLKVIVYEFSRASLNPFVVLKNFFYLAKVLKNLNLDFIQSAAHKSNTFGILAAKWAKIPYRFALVEGLGSFYIDQGFKANLVRFVINSLYKLSFKFAHQFIFVNESNAEFMRNLGLKENKICVIKSVGINLKKFFPIYVESEKKELFWKNLNIDKKPIVLMIARALWHKGVKEFYESATMLKDKANFVLVGGRDENPSCASLEFLNSGAVHYLGARSDIVELLQNCDIFVLPSYKEGFPVSVLEAKACGKAIVVSDCEGCVEAISNAYDGLWAKTKNAKDLSEKISLLLEDEKLRLNLAKNAAQDALQYDENIIAQRYLKLYDRVIKNV.

Belongs to the glycosyltransferase group 1 family.

The catalysed reaction is N,N'-diacetyl-alpha-D-bacillosaminyl-tri-trans,hepta-cis-undecaprenyl diphosphate + UDP-N-acetyl-alpha-D-galactosamine = N-acetyl-alpha-D-galactosaminyl-(1-&gt;3)-N,N'-diacetyl-alpha-D-bacillosaminyl-tri-trans,hepta-cis-undecaprenyl diphosphate + UDP + H(+). The protein operates within protein modification; protein glycosylation. Its function is as follows. Adds the first GalNAc residue on to the isoprenoid-linked bacillosamine (2,4-diacetamido-2,4,6-trideoxyglucose) carrier in the N-linked protein glycosylation pathway. Acts first on the undecaprenylpyrophosphate-linked bacillosamine (Und-PP-Bac) substrate to yield the disaccharide. This chain is N,N'-diacetylbacillosaminyl-diphospho-undecaprenol alpha-1,3-N-acetylgalactosaminyltransferase (pglA), found in Campylobacter jejuni subsp. jejuni serotype O:2 (strain ATCC 700819 / NCTC 11168).